A 354-amino-acid polypeptide reads, in one-letter code: Rhodopsin (354 aa).

Over 1 to 36 the chain is Extracellular; the sequence is MNGTEGPMFYVPMSNATGVVKSPYDYPQYYLVAPWA. N-linked (GlcNAc...) asparagine glycosylation is found at N2 and N15. The helical transmembrane segment at 37–61 threads the bilayer; it reads YGCLAAYMFFLIITGFPINFLTLYV. The Cytoplasmic segment spans residues 62–73; sequence TIEHKKLRTPLN. A helical membrane pass occupies residues 74-96; the sequence is YILLNLAISDLFMVFGGFTTTMY. The Extracellular portion of the chain corresponds to 97–110; that stretch reads TSLHGYFVFGRIGC. C110 and C187 are disulfide-bonded. A helical membrane pass occupies residues 111–133; the sequence is NLEGFFATLGGEMGLWSLVVLAF. The short motif at 134–136 is the 'Ionic lock' involved in activated form stabilization element; that stretch reads ERW. Topologically, residues 134–152 are cytoplasmic; the sequence is ERWMVVCKPVSNFRFGENH. The chain crosses the membrane as a helical span at residues 153–173; sequence AIMGVVFTWFMACTCAVPPLV. Topologically, residues 174 to 202 are extracellular; that stretch reads GWSRYIPEGMQCSCGVDYYTRAPGYNNES. A helical transmembrane segment spans residues 203–224; it reads FVIYMFLVHFIIPLIVIFFCYG. Residues 225–252 lie on the Cytoplasmic side of the membrane; that stretch reads RLVCTVKDAAAQQQESETTQRAEREVTR. A helical membrane pass occupies residues 253-274; the sequence is MVVIMVIGFLICWIPYASVAWY. Residues 275–286 are Extracellular-facing; that stretch reads IFTHQGSEFGPV. Residues 287 to 308 form a helical membrane-spanning segment; the sequence is FMTVPAFFAKSAAVYNPCIYIC. K296 is subject to N6-(retinylidene)lysine. Residues 309–354 are Cytoplasmic-facing; it reads MNKQFRHCMITTLCCGKNPFEEEEGASTTASKTEASSVSSSSVSPA. S-palmitoyl cysteine attachment occurs at residues C322 and C323. Residues 333–354 are disordered; that stretch reads GASTTASKTEASSVSSSSVSPA. Over residues 334 to 354 the composition is skewed to low complexity; the sequence is ASTTASKTEASSVSSSSVSPA.

The protein belongs to the G-protein coupled receptor 1 family. Opsin subfamily. Post-translationally, phosphorylated on some or all of the serine and threonine residues present in the C-terminal region. In terms of processing, contains one covalently linked retinal chromophore.

The protein localises to the membrane. The protein resides in the cell projection. Its subcellular location is the cilium. It localises to the photoreceptor outer segment. Its function is as follows. Photoreceptor required for image-forming vision at low light intensity. While most salt water fish species use retinal as chromophore, most freshwater fish use 3-dehydroretinal, or a mixture of retinal and 3-dehydroretinal. Light-induced isomerization of 11-cis to all-trans retinal triggers a conformational change that activates signaling via G-proteins. Subsequent receptor phosphorylation mediates displacement of the bound G-protein alpha subunit by arrestin and terminates signaling. This chain is Rhodopsin (rho), found in Cyprinus carpio (Common carp).